Here is a 93-residue protein sequence, read N- to C-terminus: UPF0147 protein PH1921.2 (93 aa).

It belongs to the UPF0147 family.

The polypeptide is UPF0147 protein PH1921.2 (Pyrococcus horikoshii (strain ATCC 700860 / DSM 12428 / JCM 9974 / NBRC 100139 / OT-3)).